The following is an 800-amino-acid chain: MKARRNKKQIPSFRKLIKTSKVKLENKLKNKQFKQQSTLKKYRKEQRKLRQAVKDAVSKKPIPLENPKEKRPGKRIEREEEEEEEALPLDMMDEDDLQLMKDLGQRVSFLTRDLSSSEPVHAKKRKHERIIDKYEKIPRTLQTAPEKELIHLLPIKDKSGIIPQTREKPVTDSNKDEEDQEEERELEEEIIEDPIQELTIEEHLIERKKKLQEKKMHIAALASAILSDPENNIKKLKELRSMLMEQDPDVAVTVRKLVIVSLMELFKDITPSYKIRPLTEAEKSTKTRKETQKLREFEEGLVSQYKFYLENLEQMVKDWKQRKLKKSNVVSLKAYKGLAEVAVKSLCELLVALPHFNFHNNIIVLIVPLMNDMSKLISEMCCEAVKKLFKQDKLGQASLGVIKVISGFVKGRNYEVRPEMLKTFLCLRIKEVEVKKDTEDINKPKKFMTFKEKRKSLSRMQRKWKKAEEKLERELREAEASESTEKKLKLHTETLNIVFVTYFRILKKAQRSPLLPAVLEGLAKFAHLINVEFFDDLLVVLHTLIESGDLSYQESLHCVQTAFHILSGQGDVLNIDPLKFYTHLYKTLFKLHAGATNEGVEIVLQCLDVMLTKRRKQVSQQRALAFIKRLCTLALHVLPNSSIGILATTRILMHTFPKTDLLLDSESQGSGVFLPELDEPEYCNAQNTALWELHALRRHYHPIVQRFAAHLIAGAPSEGSGALKPELSRRSATELFEAYSMAEMTFNPPVESSNPKIKGKFLQGDSFLNEDLNQLIKRYSSEVATESPLDFTKYLKTSLH.

2 disordered regions span residues 27-93 (KLKN…DMMD) and 160-187 (GIIP…RELE). Residues 40 to 51 (KKYRKEQRKLRQ) show a composition bias toward basic residues. The span at 66–78 (NPKEKRPGKRIER) shows a compositional bias: basic and acidic residues. Residues 79-93 (EEEEEEEALPLDMMD) are compositionally biased toward acidic residues. Residues 160-174 (GIIPQTREKPVTDSN) show a composition bias toward basic and acidic residues. Residues 175-187 (KDEEDQEEERELE) show a composition bias toward acidic residues. Lysine 333 participates in a covalent cross-link: Glycyl lysine isopeptide (Lys-Gly) (interchain with G-Cter in SUMO2). Positions 451 to 490 (KEKRKSLSRMQRKWKKAEEKLERELREAEASESTEKKLKL) form a coiled coil. Serine 787 is modified (phosphoserine).

Belongs to the CBF/MAK21 family. As to expression, expressed in colon, heart, kidney, liver, lung, placenta, skeletal muscle, small intestine, spleen and thymus.

Its subcellular location is the nucleus. It is found in the nucleolus. The protein resides in the nucleus speckle. Functionally, may be required for adipogenesis. This Homo sapiens (Human) protein is Nucleolar complex protein 3 homolog (NOC3L).